The chain runs to 435 residues: Islet cell autoantigen 1-like protein (435 aa).

The AH domain maps to 44-247; it reads ASDAELDAKL…TAQMMSQIQE (204 aa). The disordered stretch occupies residues 391 to 435; sequence WASQEGSEHSDTLPVPSQHPKKLKYLGPLSNPDAIGHSDDELLNA. Residues 426 to 435 show a composition bias toward basic and acidic residues; the sequence is GHSDDELLNA.

The polypeptide is Islet cell autoantigen 1-like protein (Ica1l) (Rattus norvegicus (Rat)).